A 103-amino-acid chain; its full sequence is UPF0145 protein PERMA_0324 (103 aa).

Belongs to the UPF0145 family.

This chain is UPF0145 protein PERMA_0324, found in Persephonella marina (strain DSM 14350 / EX-H1).